We begin with the raw amino-acid sequence, 100 residues long: Cell division topological specificity factor (100 aa).

It belongs to the MinE family.

Functionally, prevents the cell division inhibition by proteins MinC and MinD at internal division sites while permitting inhibition at polar sites. This ensures cell division at the proper site by restricting the formation of a division septum at the midpoint of the long axis of the cell. This is Cell division topological specificity factor from Synechococcus sp. (strain JA-2-3B'a(2-13)) (Cyanobacteria bacterium Yellowstone B-Prime).